The following is a 134-amino-acid chain: MESNNYINFFFKKKKYTKSVADVRNIYCSPRKLRLVADIIRNKKVEYSLFILKNIKNKGGGIIYKILLSVISNWKNYENNINNYNIYIEKVLINQGYQLKKIRPGPQGRGNKVRKRYSNLKIIINSKFNNYYGT.

It belongs to the universal ribosomal protein uL22 family. As to quaternary structure, part of the 50S ribosomal subunit.

This protein binds specifically to 23S rRNA; its binding is stimulated by other ribosomal proteins, e.g. L4, L17, and L20. It is important during the early stages of 50S assembly. It makes multiple contacts with different domains of the 23S rRNA in the assembled 50S subunit and ribosome. Its function is as follows. The globular domain of the protein is located near the polypeptide exit tunnel on the outside of the subunit, while an extended beta-hairpin is found that lines the wall of the exit tunnel in the center of the 70S ribosome. The sequence is that of Large ribosomal subunit protein uL22 from Karelsulcia muelleri (strain GWSS) (Sulcia muelleri).